Here is a 479-residue protein sequence, read N- to C-terminus: Flotillin-like protein 3 (479 aa).

Cys-36 is lipidated: S-palmitoyl cysteine. Coiled-coil stretches lie at residues 227–251 (KVKT…AALA) and 306–326 (EYET…KQAE).

This sequence belongs to the band 7/mec-2 family. Flotillin subfamily. In terms of processing, may be palmitoylated.

It localises to the cell membrane. The protein resides in the membrane. The protein localises to the caveola. Its function is as follows. May act as a scaffolding protein within caveolar membranes, functionally participating in formation of caveolae or caveolae-like vesicles. The chain is Flotillin-like protein 3 (FLOT3) from Arabidopsis thaliana (Mouse-ear cress).